We begin with the raw amino-acid sequence, 222 residues long: Orotate phosphoribosyltransferase (222 aa).

K29 lines the 5-phospho-alpha-D-ribose 1-diphosphate pocket. Position 37–38 (37–38) interacts with orotate; that stretch reads FF. 5-phospho-alpha-D-ribose 1-diphosphate contacts are provided by residues 75 to 76, R101, K102, K105, H107, and 126 to 134; these read YK and DDVISAGTS. S130 and R158 together coordinate orotate.

It belongs to the purine/pyrimidine phosphoribosyltransferase family. PyrE subfamily. As to quaternary structure, homodimer. Mg(2+) is required as a cofactor.

It catalyses the reaction orotidine 5'-phosphate + diphosphate = orotate + 5-phospho-alpha-D-ribose 1-diphosphate. It participates in pyrimidine metabolism; UMP biosynthesis via de novo pathway; UMP from orotate: step 1/2. Functionally, catalyzes the transfer of a ribosyl phosphate group from 5-phosphoribose 1-diphosphate to orotate, leading to the formation of orotidine monophosphate (OMP). This chain is Orotate phosphoribosyltransferase, found in Polynucleobacter necessarius subsp. necessarius (strain STIR1).